A 201-amino-acid chain; its full sequence is Lymphocyte antigen 6 complex locus protein G5b (201 aa).

The signal sequence occupies residues 1-18 (MKVHMLVGVLVMVGFTVG). The region spanning 26 to 118 (RTCHFCLVED…SPQLQSSLPE (93 aa)) is the UPAR/Ly6 domain. 5 disulfides stabilise this stretch: Cys28–Cys55, Cys31–Cys40, Cys47–Cys73, Cys81–Cys98, and Cys99–Cys104. 2 N-linked (GlcNAc...) asparagine glycosylation sites follow: Asn141 and Asn183.

Forms oligomer. Post-translationally, N-glycosylated.

It localises to the secreted. The polypeptide is Lymphocyte antigen 6 complex locus protein G5b (LY6G5B) (Homo sapiens (Human)).